We begin with the raw amino-acid sequence, 157 residues long: SsrA-binding protein (157 aa).

It belongs to the SmpB family.

It is found in the cytoplasm. Its function is as follows. Required for rescue of stalled ribosomes mediated by trans-translation. Binds to transfer-messenger RNA (tmRNA), required for stable association of tmRNA with ribosomes. tmRNA and SmpB together mimic tRNA shape, replacing the anticodon stem-loop with SmpB. tmRNA is encoded by the ssrA gene; the 2 termini fold to resemble tRNA(Ala) and it encodes a 'tag peptide', a short internal open reading frame. During trans-translation Ala-aminoacylated tmRNA acts like a tRNA, entering the A-site of stalled ribosomes, displacing the stalled mRNA. The ribosome then switches to translate the ORF on the tmRNA; the nascent peptide is terminated with the 'tag peptide' encoded by the tmRNA and targeted for degradation. The ribosome is freed to recommence translation, which seems to be the essential function of trans-translation. The protein is SsrA-binding protein of Levilactobacillus brevis (strain ATCC 367 / BCRC 12310 / CIP 105137 / JCM 1170 / LMG 11437 / NCIMB 947 / NCTC 947) (Lactobacillus brevis).